The following is a 430-amino-acid chain: 3-phosphoshikimate 1-carboxyvinyltransferase (430 aa).

3-phosphoshikimate-binding residues include Lys25, Ser26, and Arg30. Lys25 serves as a coordination point for phosphoenolpyruvate. Residues Gly98 and Arg126 each coordinate phosphoenolpyruvate. Residues Ser169, Ser170, Gln171, Ser198, Glu313, and His342 each coordinate 3-phosphoshikimate. Gln171 provides a ligand contact to phosphoenolpyruvate. The Proton acceptor role is filled by Glu313. Phosphoenolpyruvate-binding residues include Arg346, Arg387, and Lys412.

It belongs to the EPSP synthase family. Monomer.

It is found in the cytoplasm. It catalyses the reaction 3-phosphoshikimate + phosphoenolpyruvate = 5-O-(1-carboxyvinyl)-3-phosphoshikimate + phosphate. Its pathway is metabolic intermediate biosynthesis; chorismate biosynthesis; chorismate from D-erythrose 4-phosphate and phosphoenolpyruvate: step 6/7. In terms of biological role, catalyzes the transfer of the enolpyruvyl moiety of phosphoenolpyruvate (PEP) to the 5-hydroxyl of shikimate-3-phosphate (S3P) to produce enolpyruvyl shikimate-3-phosphate and inorganic phosphate. The protein is 3-phosphoshikimate 1-carboxyvinyltransferase of Mycobacterium leprae (strain TN).